The sequence spans 394 residues: Alcohol dehydrogenase-like 3 (394 aa).

8 residues coordinate Zn(2+): Cys-48, Thr-50, His-71, Cys-101, Cys-104, Cys-107, Cys-115, and Cys-188. Thr-50 and His-71 together coordinate an alcohol. Thr-50 contributes to the NAD(+) binding site. Residues 213 to 218 (GLGSVG), Asp-237, Lys-242, Thr-283, Val-306, 306 to 308 (VGI), Phe-333, and Arg-383 each bind NAD(+).

Belongs to the zinc-containing alcohol dehydrogenase family. Class-III subfamily. As to quaternary structure, homodimer. Zn(2+) serves as cofactor.

It is found in the cytoplasm. The enzyme catalyses a primary alcohol + NAD(+) = an aldehyde + NADH + H(+). It carries out the reaction a secondary alcohol + NAD(+) = a ketone + NADH + H(+). This chain is Alcohol dehydrogenase-like 3, found in Arabidopsis thaliana (Mouse-ear cress).